A 449-amino-acid chain; its full sequence is Glutamyl-tRNA reductase (449 aa).

Substrate is bound by residues 58 to 61, S121, 126 to 128, and Q132; these read TCNR and ETQ. C59 acts as the Nucleophile in catalysis. 203-208 serves as a coordination point for NADP(+); the sequence is GLGEMA.

It belongs to the glutamyl-tRNA reductase family. Homodimer.

The enzyme catalyses (S)-4-amino-5-oxopentanoate + tRNA(Glu) + NADP(+) = L-glutamyl-tRNA(Glu) + NADPH + H(+). It participates in porphyrin-containing compound metabolism; protoporphyrin-IX biosynthesis; 5-aminolevulinate from L-glutamyl-tRNA(Glu): step 1/2. Catalyzes the NADPH-dependent reduction of glutamyl-tRNA(Glu) to glutamate 1-semialdehyde (GSA). The sequence is that of Glutamyl-tRNA reductase from Helicobacter pylori (strain Shi470).